Consider the following 360-residue polypeptide: Ferrochelatase (360 aa).

Residues His-210 and Glu-291 each coordinate Fe cation.

It belongs to the ferrochelatase family.

It is found in the cytoplasm. It carries out the reaction heme b + 2 H(+) = protoporphyrin IX + Fe(2+). The protein operates within porphyrin-containing compound metabolism; protoheme biosynthesis; protoheme from protoporphyrin-IX: step 1/1. Catalyzes the ferrous insertion into protoporphyrin IX. This chain is Ferrochelatase, found in Pseudoalteromonas atlantica (strain T6c / ATCC BAA-1087).